A 299-amino-acid polypeptide reads, in one-letter code: Pyridoxal 5'-phosphate synthase subunit PdxS (299 aa).

Residue Asp24 participates in D-ribose 5-phosphate binding. Lys81 serves as the catalytic Schiff-base intermediate with D-ribose 5-phosphate. Residue Gly153 coordinates D-ribose 5-phosphate. A D-glyceraldehyde 3-phosphate-binding site is contributed by Arg165. D-ribose 5-phosphate-binding positions include Gly219 and 240–241 (GS).

Belongs to the PdxS/SNZ family. In terms of assembly, in the presence of PdxT, forms a dodecamer of heterodimers.

It carries out the reaction aldehydo-D-ribose 5-phosphate + D-glyceraldehyde 3-phosphate + L-glutamine = pyridoxal 5'-phosphate + L-glutamate + phosphate + 3 H2O + H(+). The protein operates within cofactor biosynthesis; pyridoxal 5'-phosphate biosynthesis. In terms of biological role, catalyzes the formation of pyridoxal 5'-phosphate from ribose 5-phosphate (RBP), glyceraldehyde 3-phosphate (G3P) and ammonia. The ammonia is provided by the PdxT subunit. Can also use ribulose 5-phosphate and dihydroxyacetone phosphate as substrates, resulting from enzyme-catalyzed isomerization of RBP and G3P, respectively. In Methanococcus maripaludis (strain C5 / ATCC BAA-1333), this protein is Pyridoxal 5'-phosphate synthase subunit PdxS.